The primary structure comprises 370 residues: Putative glutamate--cysteine ligase 2 (370 aa).

It belongs to the glutamate--cysteine ligase type 2 family. YbdK subfamily.

It carries out the reaction L-cysteine + L-glutamate + ATP = gamma-L-glutamyl-L-cysteine + ADP + phosphate + H(+). In terms of biological role, ATP-dependent carboxylate-amine ligase which exhibits weak glutamate--cysteine ligase activity. The chain is Putative glutamate--cysteine ligase 2 from Methylibium petroleiphilum (strain ATCC BAA-1232 / LMG 22953 / PM1).